The primary structure comprises 230 residues: Fibronectin type III domain-containing protein 4 (230 aa).

A signal peptide spans 1–40; it reads MPGCLPADSVGTMASLMPLSPYLSPTVLLLVSCDLGFVRA. Residues 41–163 are Extracellular-facing; sequence DRPPSPVNVT…GLDGERPLQT (123 aa). One can recognise a Fibronectin type-III domain in the interval 43–136; that stretch reads PPSPVNVTVT…PRVHFRTLKG (94 aa). Asn-48 and Asn-143 each carry an N-linked (GlcNAc...) asparagine glycan. The interval 118-156 is disordered; it reads GLRGESPPGPRVHFRTLKGSDRLPSNSSSPGDITVEGLD. Residues 164–184 form a helical membrane-spanning segment; sequence GEVVIIVVVLLMWAAVIGLFC. The Cytoplasmic portion of the chain corresponds to 185–230; the sequence is RQYDIIKDNDSNNNPKEKGKGPEQSPQGRPVGTRQKKSPSINTIDV. The segment covering 193-205 has biased composition (basic and acidic residues); it reads NDSNNNPKEKGKG. The interval 193-230 is disordered; sequence NDSNNNPKEKGKGPEQSPQGRPVGTRQKKSPSINTIDV.

Its subcellular location is the membrane. It localises to the secreted. Its function is as follows. Has anti-inflammatory properties. In the colon, acts on macrophages to down-regulate inflammation. May suppress osteoclastogenesis and mature osteoclast resorptive function. In white adipose tissue, decreases local inflammation, via interaction with GPR116. Also required for proper systemic glucose tolerance, specifically sensitizing white adipocytes to insulin and promoting glucose uptake. The insulin sensitizing function in adipose tissue is mediated by interaction with ADGRF5/GPR116 and activation of cAMP signaling. This Bos taurus (Bovine) protein is Fibronectin type III domain-containing protein 4 (FNDC4).